The chain runs to 374 residues: Chaperone protein DnaJ (374 aa).

The J domain maps to 6-70 (DYYDILGVSK…QKRAQYDQFG (65 aa)). Residues 135 to 217 (GKKTTIKYSR…CGGTGHTSQQ (83 aa)) form a CR-type zinc finger. Positions 148, 151, 165, 168, 191, 194, 205, and 208 each coordinate Zn(2+). CXXCXGXG motif repeat units lie at residues 148 to 155 (CKTCGGSG), 165 to 172 (CHKCNGTG), 191 to 198 (CDVCNGTG), and 205 to 212 (CPTCGGTG). Disordered stretches follow at residues 308–328 (GTNF…GTGD) and 347–374 (EALK…KFMN).

It belongs to the DnaJ family. Homodimer. Requires Zn(2+) as cofactor.

The protein resides in the cytoplasm. Functionally, participates actively in the response to hyperosmotic and heat shock by preventing the aggregation of stress-denatured proteins and by disaggregating proteins, also in an autonomous, DnaK-independent fashion. Unfolded proteins bind initially to DnaJ; upon interaction with the DnaJ-bound protein, DnaK hydrolyzes its bound ATP, resulting in the formation of a stable complex. GrpE releases ADP from DnaK; ATP binding to DnaK triggers the release of the substrate protein, thus completing the reaction cycle. Several rounds of ATP-dependent interactions between DnaJ, DnaK and GrpE are required for fully efficient folding. Also involved, together with DnaK and GrpE, in the DNA replication of plasmids through activation of initiation proteins. This Pediococcus pentosaceus (strain ATCC 25745 / CCUG 21536 / LMG 10740 / 183-1w) protein is Chaperone protein DnaJ.